The chain runs to 372 residues: UDP-N-acetylenolpyruvoylglucosamine reductase (372 aa).

The FAD-binding PCMH-type domain maps to 29 to 205 (VGPTARRLIT…LEVEFALDAS (177 aa)). R177 is an active-site residue. The active-site Proton donor is the S260. The active site involves E364.

Belongs to the MurB family. The cofactor is FAD.

The protein resides in the cytoplasm. The enzyme catalyses UDP-N-acetyl-alpha-D-muramate + NADP(+) = UDP-N-acetyl-3-O-(1-carboxyvinyl)-alpha-D-glucosamine + NADPH + H(+). It participates in cell wall biogenesis; peptidoglycan biosynthesis. Its function is as follows. Cell wall formation. The protein is UDP-N-acetylenolpyruvoylglucosamine reductase of Mycobacterium avium (strain 104).